The sequence spans 550 residues: Chaperonin GroEL (550 aa).

ATP-binding positions include 29 to 32 (TLGP), Lys-50, 86 to 90 (DGTTT), Gly-414, and Asp-495.

The protein belongs to the chaperonin (HSP60) family. As to quaternary structure, forms a cylinder of 14 subunits composed of two heptameric rings stacked back-to-back. Interacts with the co-chaperonin GroES.

It localises to the cytoplasm. It carries out the reaction ATP + H2O + a folded polypeptide = ADP + phosphate + an unfolded polypeptide.. In terms of biological role, together with its co-chaperonin GroES, plays an essential role in assisting protein folding. The GroEL-GroES system forms a nano-cage that allows encapsulation of the non-native substrate proteins and provides a physical environment optimized to promote and accelerate protein folding. The chain is Chaperonin GroEL from Parvibaculum lavamentivorans (strain DS-1 / DSM 13023 / NCIMB 13966).